Here is an 803-residue protein sequence, read N- to C-terminus: Mechanosensitive cation channel TMEM63A (803 aa).

Residues 1-51 (MTDSPFLELWQSRTVAIRERLGIGDQPNDSYCYNSAKNSTVLQGVTFGGIP) are Extracellular-facing. Residues 52–74 (TVLFIDVSCFLFLIVVFSIIRRK) traverse the membrane as a helical segment. The Cytoplasmic portion of the chain corresponds to 75–133 (FWDYGRIALVSEGNSESRFRRLSSSSSGQQDFESELGCCSWLTAIFRLHDDQILEWCGE). Residues 134 to 166 (DAIHYLSFQRHIIFLLVVVSCLSLCIILPVNLS) form a helical membrane-spanning segment. The Extracellular segment spans residues 167 to 190 (GDLLDKDPYSFGRTTIANLQTDNN). Residues 191–216 (LLWLHTIFAILYLILTVVFMRHHTQS) traverse the membrane as a helical segment. Topologically, residues 217–415 (IKYKEESLVR…CWKNLSIQGF (199 aa)) are cytoplasmic. Residues 218–413 (KYKEESLVRR…DICWKNLSIQ (196 aa)) form an intracellular linker IL2; confers mechanosensitivity region. A helical transmembrane segment spans residues 416-443 (RWWFQWLGINFILFVGLFFLTTPSIILS). Over 444 to 461 (TMDKFNVTKPIHALNDPI) the chain is Extracellular. Residues 462 to 489 (ISQFFPTLLLWSFSALLPTIVCYSTLLE) traverse the membrane as a helical segment. Residues 490–494 (SHWTK) are Cytoplasmic-facing. The chain crosses the membrane as a helical span at residues 495–531 (SGENRIMMTKVYIFLIFMVLILPSLGLTSLDFFFRWL). The Extracellular portion of the chain corresponds to 532 to 553 (FDKTSSEASIRLECVFLPDQGA). A helical membrane pass occupies residues 554–585 (FFVNYVIASAFIGNGMELLRLPGLILYTFRMV). The gating helix stretch occupies residues 554–585 (FFVNYVIASAFIGNGMELLRLPGLILYTFRMV). At 586–605 (MAKTAADRRNVKQHQAFEYE) the chain is on the cytoplasmic side. Residues 606 to 623 (FGAMYAWMLCVFTVIMAY) form a helical membrane-spanning segment. Residues 624-627 (SITC) lie on the Extracellular side of the membrane. Residues 628–650 (PIIVPFGLIYILLKHMVDRHNLY) traverse the membrane as a helical segment. The Cytoplasmic portion of the chain corresponds to 651–660 (FAYLPAKLEK). A helical membrane pass occupies residues 661–688 (RIHFAAVNQALAAPILCLFWLYFFSFLR). Residues 689–693 (LGLKA) lie on the Extracellular side of the membrane. Residues 694 to 708 (PLTLFTFLVLLLTIL) traverse the membrane as a helical segment. The Cytoplasmic portion of the chain corresponds to 709–803 (VCLAYTCFGC…DSVAAADQED (95 aa)).

It belongs to the CSC1 (TC 1.A.17) family. (Microbial infection) Interacts with H.contortus GAL-1 (via domain galectin 1).

It localises to the lysosome membrane. The protein localises to the early endosome membrane. The protein resides in the cell membrane. It catalyses the reaction Ca(2+)(in) = Ca(2+)(out). Mechanosensitive cation channel with low conductance and high activation threshold. In contrast to TMEM63B, does not show phospholipid scramblase activity. Acts as a regulator of lysosomal morphology by mediating lysosomal mechanosensitivity. Important for the baby's first breath and respiration throughout life. Upon lung inflation conducts cation currents in alveolar type 1 and 2 cells triggering lamellar body exocytosis and surfactant secretion into airspace. Also acts as an osmosensitive cation channel preferentially activated by hypotonic stress. Its function is as follows. (Microbial infection) Involved in the immunomodulatory effects exerted by H.contortus GAL-1 on host peripheral blood mononuclear cells to down-regulate host immune response. The polypeptide is Mechanosensitive cation channel TMEM63A (TMEM63A) (Capra hircus (Goat)).